We begin with the raw amino-acid sequence, 329 residues long: GTPase Obg (329 aa).

An Obg domain is found at 1–159 (MQFIDQARIT…WLLHLELKLL (159 aa)). One can recognise an OBG-type G domain in the interval 160–328 (AEVGIIGLPN…LLNKIWSKLE (169 aa)). ATP is bound by residues 166-173 (GLPNAGKS), 191-195 (FTTLI), 213-216 (DIPG), 280-283 (NKKE), and 309-311 (SAI). Residues S173 and T193 each contribute to the Mg(2+) site.

This sequence belongs to the TRAFAC class OBG-HflX-like GTPase superfamily. OBG GTPase family. In terms of assembly, monomer. Mg(2+) is required as a cofactor.

It localises to the cytoplasm. Its function is as follows. An essential GTPase which binds GTP, GDP and possibly (p)ppGpp with moderate affinity, with high nucleotide exchange rates and a fairly low GTP hydrolysis rate. Plays a role in control of the cell cycle, stress response, ribosome biogenesis and in those bacteria that undergo differentiation, in morphogenesis control. This Prochlorococcus marinus (strain SARG / CCMP1375 / SS120) protein is GTPase Obg.